Here is a 32-residue protein sequence, read N- to C-terminus: MSDIN-like toxin proprotein a (32 aa).

The propeptide occupies 1 to 10; sequence MSDINATRLP. Residues 11–18 constitute a cross-link (cyclopeptide (Ile-Pro)); the sequence is IIGILLPP. The propeptide occupies 19–32; sequence CIGDDVTLLLTRGE.

The protein belongs to the MSDIN fungal toxin family. Processed by the macrocyclase-peptidase enzyme POPB to yield a toxic cyclic octapeptide. POPB first removes 10 residues from the N-terminus. Conformational trapping of the remaining peptide forces the enzyme to release this intermediate rather than proceed to macrocyclization. The enzyme rebinds the remaining peptide in a different conformation and catalyzes macrocyclization of the N-terminal 8 residues.

In terms of biological role, probable toxin that belongs to the MSDIN-like toxin family responsible for a large number of food poisoning cases and deaths. This chain is MSDIN-like toxin proprotein a, found in Amanita phalloides (Death cap).